The sequence spans 1704 residues: Nonribosomal peptide synthetase ivoA (1704 aa).

Positions 234 to 620 are adenylation; the sequence is EEQAIARPDQ…HGRKDLEVKI (387 aa). The 80-residue stretch at 748–827 folds into the Carrier domain; sequence NLISDPSDSM…EMATKTSAVE (80 aa). O-(pantetheine 4'-phosphoryl)serine is present on Ser785. Positions 840 to 1266 are epimerization (E) domain; that stretch reads FPLSPVQQMY…QELLETAVER (427 aa). The segment at 1325-1477 is condensation; it reads VQGDWTIEKT…AQSSTPSARK (153 aa).

Belongs to the NRP synthetase family.

It catalyses the reaction L-tryptophan + ATP + H2O = D-tryptophan + AMP + diphosphate + H(+). It participates in pigment biosynthesis. Nonribosomal peptide synthetase; part of the pathway that mediates the biosynthesis of the gray-brown conidiophore pigment. The first step of the pathway is performed by the nonribosomal peptide synthetase ivoA that catalyzes ATP-dependent unidirectional stereoinversion of L-tryptophan to D-tryptophan with complete conversion. While the stereoinversion is catalyzed by the epimerization (E) domain of ivoA, the terminal condensation (C) domain stereoselectively hydrolyzes D-tryptophanyl-S-phosphopantetheine thioester and thus represents a non-canonical C domain function. D-tryptophan is acetylated, probably by an endogenous acetyltransferase. N-acetyltryptophan is further 6-hydroxylated into N-acetyl-6-hydroxytryptophan (AHT) by the cytochrome P450 monooxygenase ivoC. N-acetyl-6-hydroxytryptophan is substrate of the N-acetyl-6-hydroxytryptophan oxidase ivoB to produce the gray-brown conidiophore pigment. This is Nonribosomal peptide synthetase ivoA from Emericella nidulans (strain FGSC A4 / ATCC 38163 / CBS 112.46 / NRRL 194 / M139) (Aspergillus nidulans).